Reading from the N-terminus, the 159-residue chain is MMLRRLHHPILNPHTNILSVRYMQLTAYMLFVVCPLAVHLLELEDYDKRCRCNNQILLNTLPIGTELLKPIAASESCNRQEVLAILKDKGTKCLNPNAQAVRRHINRLFFRLILDEEQRIYDVVSTNIEFGAWPVPTAYKAFLWKYAKKLNYHHFRLRW.

2 disulfide bridges follow: cysteine 50-cysteine 77 and cysteine 52-cysteine 93.

Belongs to the intercrine alpha (chemokine CxC) family.

In Human cytomegalovirus (strain Towne) (HHV-5), this protein is Putative viral CXC chemokine 2 (UL147).